Here is a 78-residue protein sequence, read N- to C-terminus: Acyl carrier protein (78 aa).

The Carrier domain occupies 2–77; sequence DDLFKKIQQL…DAYEFIKSQQ (76 aa). At S37 the chain carries O-(pantetheine 4'-phosphoryl)serine.

This sequence belongs to the acyl carrier protein (ACP) family. Post-translationally, 4'-phosphopantetheine is transferred from CoA to a specific serine of apo-ACP by AcpS. This modification is essential for activity because fatty acids are bound in thioester linkage to the sulfhydryl of the prosthetic group.

The protein resides in the cytoplasm. It participates in lipid metabolism; fatty acid biosynthesis. In terms of biological role, carrier of the growing fatty acid chain in fatty acid biosynthesis. The sequence is that of Acyl carrier protein from Treponema denticola (strain ATCC 35405 / DSM 14222 / CIP 103919 / JCM 8153 / KCTC 15104).